Reading from the N-terminus, the 286-residue chain is Deleted in azoospermia-like (286 aa).

The RRM domain occupies 30–105 (NTVFVGGIDI…KKLKLGPAIR (76 aa)). Positions 155-180 (ACPYPSSPPMAIQQIPVGCQQPSYFQ) constitute a DAZ domain.

Belongs to the RRM DAZ family. As to quaternary structure, interacts with the C-terminus of pabp1 and with epabp. Prior to oocyte maturation, found in a complex with epabp and pum2 proteins and spdy1 mRNA; pum2 dissociates from the complex during maturation. Germ-line specific; expressed in adult testis and ovary. Localized specifically to the oocyte and embryonic germ plasm and to migrating primordial germ cells (PGCs).

It is found in the cytoplasm. Functionally, RNA-binding protein that is required for primordial germ cell (PGC) differentiation and indirectly necessary for the migration of PGCs through the endoderm. May promote meiotic cell division during spermatogenesis. Shows a preference for G- and U-rich RNAs and probably binds the 3'-UTR of target mRNAs. Stimulates the initiation of translation of mRNAs through the recruitment of poly(A)-binding proteins (PABPs). The polypeptide is Deleted in azoospermia-like (Xenopus tropicalis (Western clawed frog)).